The following is a 148-amino-acid chain: Large ribosomal subunit protein bL9 (148 aa).

It belongs to the bacterial ribosomal protein bL9 family.

Binds to the 23S rRNA. This Methylococcus capsulatus (strain ATCC 33009 / NCIMB 11132 / Bath) protein is Large ribosomal subunit protein bL9.